The following is a 396-amino-acid chain: MALRTIDALDLAGKRVFIRVDFNVPLDPQGRVTDDARIRAALPTIRHAIQAKAKVILASHLGRPKGKPDDRQKLTLEPAAVRLSELLSQDVILADDCVGDGVKKLVRDLKDGHVLLLENLRFHPEEEKNDEAFARELASLADVWVNDAFGTAHRAHASTAGMARFVKEKAAGFLVQKEVEYLGKALGSPARPFVAIVGGAKVSDKIKVLENLIAKADAICVGGAMAYTFLKAQGVPVGKSLVEEDKLELARQILERAEARKVDLLLPVDHVCGAEPKETAERVVVNDRAIPDGLMGLDIGPKTLDRYRQRIAAAKTVFWNGPMGLFEQKPWSEGTFGVAKAMAASPAVTVVGGGDSAAAVEQAGIVDAMKHVSTGGGASLEFIEGRELPGVKACEE.

Substrate is bound by residues 21-23, Arg-37, 60-63, Arg-121, and Arg-154; these read DFN and HLGR. Residues Lys-205, Gly-296, Glu-327, and 353–356 each bind ATP; that span reads GGDS.

It belongs to the phosphoglycerate kinase family. In terms of assembly, monomer.

Its subcellular location is the cytoplasm. The catalysed reaction is (2R)-3-phosphoglycerate + ATP = (2R)-3-phospho-glyceroyl phosphate + ADP. The protein operates within carbohydrate degradation; glycolysis; pyruvate from D-glyceraldehyde 3-phosphate: step 2/5. The chain is Phosphoglycerate kinase from Anaeromyxobacter sp. (strain K).